A 673-amino-acid chain; its full sequence is Probable multidrug resistance ABC transporter ATP-binding/permease protein YheH (673 aa).

The next 5 membrane-spanning stretches (helical) occupy residues 18–38 (LITA…GPFI), 146–166 (IKGM…SVFF), 223–243 (LYVT…GIFT), 245–265 (LFLL…IIWL), and 347–367 (LAFV…AGIV). Residues 18 to 398 (LITAVLLLTV…IVNQFSKLEL (381 aa)) form the ABC transmembrane type-1 domain. The ABC transporter domain maps to 430-664 (VEFRDVSFAY…EGQYYQMYEL (235 aa)). 463–470 (GHTGSGKS) is an ATP binding site.

This sequence belongs to the ABC transporter superfamily. Heterodimer composed of YheH and YheI.

The protein localises to the cell membrane. With respect to regulation, inhibited by ortho-vanadate. Its function is as follows. Involved in the transport of four structurally unrelated drugs, including doxorubicin and mitoxantrone. Transmembrane domains (TMD) form a pore in the membrane and the ATP-binding domain (NBD) is responsible for energy generation. In Bacillus subtilis (strain 168), this protein is Probable multidrug resistance ABC transporter ATP-binding/permease protein YheH (yheH).